The sequence spans 309 residues: Protease HtpX homolog (309 aa).

The next 2 helical transmembrane spans lie at 7 to 27 and 28 to 48; these read FILL…IGGP and TGML…YWNA. Histidine 134 lines the Zn(2+) pocket. The active site involves glutamate 135. Histidine 138 is a binding site for Zn(2+). Transmembrane regions (helical) follow at residues 149–169 and 177–197; these read VTAT…FFGG and PGGL…AMLV. Glutamate 206 is a binding site for Zn(2+). The tract at residues 289-309 is disordered; that stretch reads TRGRSGTAVPTGATGKSGPWG.

Belongs to the peptidase M48B family. Zn(2+) serves as cofactor.

The protein localises to the cell inner membrane. In Caulobacter sp. (strain K31), this protein is Protease HtpX homolog.